The chain runs to 478 residues: Ribulose bisphosphate carboxylase large chain (478 aa).

A propeptide spanning residues 1–2 (MS) is cleaved from the precursor. Proline 3 carries the N-acetylproline modification. N6,N6,N6-trimethyllysine is present on lysine 14. Substrate-binding residues include asparagine 123 and threonine 173. The active-site Proton acceptor is the lysine 175. Lysine 177 serves as a coordination point for substrate. Mg(2+)-binding residues include lysine 201, aspartate 203, and glutamate 204. An N6-carboxylysine modification is found at lysine 201. Histidine 294 functions as the Proton acceptor in the catalytic mechanism. Substrate is bound by residues arginine 295, histidine 327, and serine 379.

The protein belongs to the RuBisCO large chain family. Type I subfamily. As to quaternary structure, heterohexadecamer of 8 large chains and 8 small chains; disulfide-linked. The disulfide link is formed within the large subunit homodimers. The cofactor is Mg(2+). In terms of processing, the disulfide bond which can form in the large chain dimeric partners within the hexadecamer appears to be associated with oxidative stress and protein turnover.

The protein localises to the plastid. It is found in the chloroplast. The enzyme catalyses 2 (2R)-3-phosphoglycerate + 2 H(+) = D-ribulose 1,5-bisphosphate + CO2 + H2O. It carries out the reaction D-ribulose 1,5-bisphosphate + O2 = 2-phosphoglycolate + (2R)-3-phosphoglycerate + 2 H(+). Functionally, ruBisCO catalyzes two reactions: the carboxylation of D-ribulose 1,5-bisphosphate, the primary event in carbon dioxide fixation, as well as the oxidative fragmentation of the pentose substrate in the photorespiration process. Both reactions occur simultaneously and in competition at the same active site. The sequence is that of Ribulose bisphosphate carboxylase large chain from Lemna minor (Common duckweed).